The chain runs to 71 residues: Biotinylated protein TB7.3 (71 aa).

One can recognise a Biotinyl-binding domain in the interval 2–71 (AEDVRAEIVA…QAGDLIAVIS (70 aa)). K37 is subject to N6-biotinyllysine.

This is Biotinylated protein TB7.3 from Mycobacterium bovis (strain ATCC BAA-935 / AF2122/97).